Here is a 228-residue protein sequence, read N- to C-terminus: UPF0758 protein STER_1430 (228 aa).

Positions 103 to 225 (QIMSSQQVAR…YYSFREERED (123 aa)) constitute an MPN domain. Positions 174, 176, and 187 each coordinate Zn(2+). The JAMM motif motif lies at 174 to 187 (HNHPSGEAYPSRND).

Belongs to the UPF0758 family.

The chain is UPF0758 protein STER_1430 from Streptococcus thermophilus (strain ATCC BAA-491 / LMD-9).